A 105-amino-acid polypeptide reads, in one-letter code: Glycoprotein UL22A (105 aa).

The first 20 residues, 1-20, serve as a signal peptide directing secretion; it reads MARRLWILSLLAVTLTVALA. A disordered region spans residues 21–105; that stretch reads APSQKSKRSV…EHTKENEKTQ (85 aa). Residues 29–55 show a composition bias toward polar residues; that stretch reads SVTVEQPSTSTNSDGNTTPSKNVTLSQ. N-linked (GlcNAc...) asparagine; by host glycosylation is present at Asn-50. Over residues 86–105 the composition is skewed to basic and acidic residues; it reads PQEKTDEHKGEHTKENEKTQ.

Belongs to the HHV-5 UL22A protein family.

It localises to the virion. The chain is Glycoprotein UL22A (UL22A) from Homo sapiens (Human).